Consider the following 90-residue polypeptide: Lantipeptide prochlorosin 1.7 (90 aa).

Positions 1 to 68 are excised as a propeptide; that stretch reads MSEEQLKAFI…DAELEGVAGG (68 aa). 2,3-didehydrobutyrine is present on residues threonine 69 and threonine 73. Residues 76 to 79 constitute a cross-link (lanthionine (Ser-Cys)); sequence SITC. Cross-links (beta-methyllanthionine (Thr-Cys)) lie at residues 78-82 and 81-90; these read TCETC and TCDLLVGKMC.

Cross-links are proved in vitro, when coepressed in E.coli with the ProcM lanthionine synthetase. In terms of processing, the lanthionine residue has a DL configuration (with 2S,6R stereochemistry), whereas the beta-methyllanthionine residues have a DL configuration (with 2S,3S,6R stereochemistry). Post-translationally, maturation of prochlorosin involves the enzymatic conversion of Thr, and Ser into dehydrated AA and the formation of thioether bonds with cysteines. This is followed by membrane translocation and cleavage of the modified precursor.

The protein localises to the secreted. In terms of biological role, lanthionine-containing peptide (lantipeptide) with unknown function. Does not show antibiotic activity against Lactococcus lactis 117 and Bacillus subtilis 6633 bacteria. Organisms that produce this peptide live in oligotrophic environments at very dilute concentrations, suggesting this peptide is not secreted to influence other bacteria. The sequence is that of Lantipeptide prochlorosin 1.7 from Prochlorococcus marinus (strain MIT 9313).